A 226-amino-acid chain; its full sequence is PKHD-type hydroxylase Pput_0892 (226 aa).

Positions 78 to 178 (KVFPPLINCY…RYAAFFWTQS (101 aa)) constitute a Fe2OG dioxygenase domain. Fe cation is bound by residues His96, Asp98, and His159. Arg169 contacts 2-oxoglutarate.

Requires Fe(2+) as cofactor. The cofactor is L-ascorbate.

This is PKHD-type hydroxylase Pput_0892 from Pseudomonas putida (strain ATCC 700007 / DSM 6899 / JCM 31910 / BCRC 17059 / LMG 24140 / F1).